The primary structure comprises 140 residues: UPF0102 protein Ppro_1186 (140 aa).

Residues 1 to 27 are disordered; it reads MKRPGDGRQESPSSTARPDNRNTGSRG. Positions 10–25 are enriched in polar residues; it reads ESPSSTARPDNRNTGS.

This sequence belongs to the UPF0102 family.

In Pelobacter propionicus (strain DSM 2379 / NBRC 103807 / OttBd1), this protein is UPF0102 protein Ppro_1186.